Here is a 264-residue protein sequence, read N- to C-terminus: Thymidylate synthase (264 aa).

A dUMP-binding site is contributed by Arg-21. (6R)-5,10-methylene-5,6,7,8-tetrahydrofolate is bound at residue His-51. Position 126 to 127 (Arg-126 to Arg-127) interacts with dUMP. Cys-146 (nucleophile) is an active-site residue. DUMP-binding positions include Arg-166–Asp-169, Asn-177, and His-207–Tyr-209. Asp-169 contributes to the (6R)-5,10-methylene-5,6,7,8-tetrahydrofolate binding site. Residue Ser-263 participates in (6R)-5,10-methylene-5,6,7,8-tetrahydrofolate binding.

Belongs to the thymidylate synthase family. Bacterial-type ThyA subfamily. In terms of assembly, homodimer.

It localises to the cytoplasm. It carries out the reaction dUMP + (6R)-5,10-methylene-5,6,7,8-tetrahydrofolate = 7,8-dihydrofolate + dTMP. The protein operates within pyrimidine metabolism; dTTP biosynthesis. In terms of biological role, catalyzes the reductive methylation of 2'-deoxyuridine-5'-monophosphate (dUMP) to 2'-deoxythymidine-5'-monophosphate (dTMP) while utilizing 5,10-methylenetetrahydrofolate (mTHF) as the methyl donor and reductant in the reaction, yielding dihydrofolate (DHF) as a by-product. This enzymatic reaction provides an intracellular de novo source of dTMP, an essential precursor for DNA biosynthesis. In Buchnera aphidicola subsp. Schizaphis graminum (strain Sg), this protein is Thymidylate synthase.